Here is a 317-residue protein sequence, read N- to C-terminus: D-alanine--D-alanine ligase (317 aa).

In terms of domain architecture, ATP-grasp spans 103 to 299; the sequence is KHIFHSLNID…FNELVKIIVE (197 aa). An ATP-binding site is contributed by 130–183; that stretch reads KVDYPYVLKPINEGSSIGVHMIFSHEDYLELKNNSSTIMEKMIIEEYIPGIELH. Asp251, Glu265, and Asn267 together coordinate Mg(2+).

Belongs to the D-alanine--D-alanine ligase family. Mg(2+) is required as a cofactor. The cofactor is Mn(2+).

It localises to the cytoplasm. The catalysed reaction is 2 D-alanine + ATP = D-alanyl-D-alanine + ADP + phosphate + H(+). It participates in cell wall biogenesis; peptidoglycan biosynthesis. In terms of biological role, cell wall formation. This is D-alanine--D-alanine ligase from Wolbachia pipientis subsp. Culex pipiens (strain wPip).